The sequence spans 612 residues: Dihydroxy-acid dehydratase (612 aa).

Asp-81 provides a ligand contact to Mg(2+). Cys-122 contacts [2Fe-2S] cluster. Mg(2+) is bound by residues Asp-123 and Lys-124. Lys-124 carries the N6-carboxylysine modification. Cys-195 contacts [2Fe-2S] cluster. Glu-491 lines the Mg(2+) pocket. The active-site Proton acceptor is the Ser-517.

This sequence belongs to the IlvD/Edd family. In terms of assembly, homodimer. Requires [2Fe-2S] cluster as cofactor. The cofactor is Mg(2+).

It catalyses the reaction (2R)-2,3-dihydroxy-3-methylbutanoate = 3-methyl-2-oxobutanoate + H2O. The enzyme catalyses (2R,3R)-2,3-dihydroxy-3-methylpentanoate = (S)-3-methyl-2-oxopentanoate + H2O. It participates in amino-acid biosynthesis; L-isoleucine biosynthesis; L-isoleucine from 2-oxobutanoate: step 3/4. Its pathway is amino-acid biosynthesis; L-valine biosynthesis; L-valine from pyruvate: step 3/4. Its function is as follows. Functions in the biosynthesis of branched-chain amino acids. Catalyzes the dehydration of (2R,3R)-2,3-dihydroxy-3-methylpentanoate (2,3-dihydroxy-3-methylvalerate) into 2-oxo-3-methylpentanoate (2-oxo-3-methylvalerate) and of (2R)-2,3-dihydroxy-3-methylbutanoate (2,3-dihydroxyisovalerate) into 2-oxo-3-methylbutanoate (2-oxoisovalerate), the penultimate precursor to L-isoleucine and L-valine, respectively. The sequence is that of Dihydroxy-acid dehydratase from Rhizobium leguminosarum bv. trifolii (strain WSM2304).